A 909-amino-acid polypeptide reads, in one-letter code: UPF0182 protein Moth_1139 (909 aa).

A run of 7 helical transmembrane segments spans residues 8–28 (FCLL…SHFL), 51–71 (VGIR…NLLF), 103–123 (LGIL…PLAA), 165–185 (LLIT…FIFN), 201–221 (LVHF…GFRL), 245–265 (LLPG…IIVL), and 277–297 (AGIL…PLAV). Residues 843 to 862 (PAPAASPQPPSQAATGSPGN) are disordered.

This sequence belongs to the UPF0182 family.

The protein resides in the cell membrane. In Moorella thermoacetica (strain ATCC 39073 / JCM 9320), this protein is UPF0182 protein Moth_1139.